The chain runs to 571 residues: Phototropic-responsive NPH3 family protein NPY1 (571 aa).

The BTB domain occupies 29–97; sequence SDVTIHVGEV…CYGMTVTLNA (69 aa). The 259-residue stretch at 210–468 folds into the NPH3 domain; it reads DWWVEDVCEL…VQVLYFEQLR (259 aa). Tyrosine 409 bears the Phosphotyrosine mark. A disordered region spans residues 475–571; the sequence is ASVAASSHSP…SSRRRRHSIS (97 aa). Residues 484 to 504 are compositionally biased toward basic and acidic residues; that stretch reads PVEKTEENKGEEATKKVELSK. Positions 540–562 are enriched in low complexity; the sequence is SNKSSEVSSGSSQSPPAKSSSSS.

The protein belongs to the NPH3 family. Component of a complex made of PINs (e.g. PIN1 and PIN2), MAB4/MELs (e.g. NPY1/MAB4 and NPY5/MEL1) and AGC kinases (e.g. D6PK and PID) at the plasma membrane. Binds directly to PIN2 and PID. As to expression, accumulates in organ primordia such as cotyledons, leaves and floral organs. Expressed mainly in the apical regions of embryos including cotyledon tips and the apical meristem. Induced by the transcription factor ARF5/MP at the periphery of inflorescence meristems. Highly expressed in primary root tips and radicles.

The protein localises to the late endosome. Its subcellular location is the cell membrane. The protein resides in the cytoplasm. It is found in the cytosol. It functions in the pathway protein modification; protein ubiquitination. Its function is as follows. May act as a substrate-specific adapter of an E3 ubiquitin-protein ligase complex (CUL3-RBX1-BTB) which mediates the ubiquitination and subsequent proteasomal degradation of target proteins. Coregulates with PID the auxin-mediated plant organogenesis. Regulates basipetal PIN proteins (e.g. PIN1) polarization to establish inward auxin transport from the L1 surface of incipient organ primordia; this process is essential for the progression of flower organs development. Recruited to the plasma membrane by PINs (e.g. PIN1 and PIN2) and, in concert with AGC kinases-mediated (e.g. D6PK and PID) PINs phosphorylation, maintains their cell polarity (apical or basal) through limiting lateral diffusion-based escape. Induces auxin response in inner cell layers through a shift in PIN1 localization. Influences cotyledon development by regulating auxin distribution mainly in the protodermal cell layer. May play an essential role in root gravitropic responses. The polypeptide is Phototropic-responsive NPH3 family protein NPY1 (Arabidopsis thaliana (Mouse-ear cress)).